A 184-amino-acid polypeptide reads, in one-letter code: Photosystem I assembly protein Ycf4 (184 aa).

Transmembrane regions (helical) follow at residues 19 to 39 (ISNL…FLVG) and 57 to 77 (IIFF…LFIS).

This sequence belongs to the Ycf4 family.

The protein resides in the plastid thylakoid membrane. Its function is as follows. Seems to be required for the assembly of the photosystem I complex. This is Photosystem I assembly protein Ycf4 from Cuscuta exaltata (Tall dodder).